Reading from the N-terminus, the 220-residue chain is Adenylate kinase (220 aa).

Residue 10-15 participates in ATP binding; it reads GAGKGT. Residues 30 to 59 form an NMP region; the sequence is STGDMLRAAVKAGTPLGVEAKGYMDAGKLV. Residues Thr31, Arg36, 57-59, 85-88, and Gln92 each bind AMP; these read KLV and GFPR. The LID stretch occupies residues 122-159; the sequence is GRRTHPASGRTYHVKFNPPKVEGHDDVTGEPLIQRDDD. Residues Arg123 and 132 to 133 contribute to the ATP site; that span reads TY. The AMP site is built by Arg156 and Arg167. Residue Gly206 coordinates ATP.

The protein belongs to the adenylate kinase family. Monomer.

It is found in the cytoplasm. The enzyme catalyses AMP + ATP = 2 ADP. It participates in purine metabolism; AMP biosynthesis via salvage pathway; AMP from ADP: step 1/1. Functionally, catalyzes the reversible transfer of the terminal phosphate group between ATP and AMP. Plays an important role in cellular energy homeostasis and in adenine nucleotide metabolism. The protein is Adenylate kinase of Burkholderia cenocepacia (strain HI2424).